Here is a 317-residue protein sequence, read N- to C-terminus: Probable cell division protein WhiA (317 aa).

The H-T-H motif DNA-binding region spans 275 to 308 (SLKELGEMLVPKVGKSGVNHRMRKIDELAEKLEE).

Belongs to the WhiA family.

Functionally, involved in cell division and chromosome segregation. The polypeptide is Probable cell division protein WhiA (Desulfitobacterium hafniense (strain DSM 10664 / DCB-2)).